The primary structure comprises 700 residues: MAQDVLTDLSKVRNIGIMAHIDAGKTTTTERILYYTGVNYKIGETHDGASTTDWMEQEQERGITITSAAVTCFWNQNQINIIDTPGHVDFTVEVERSLRVLDGAVAVFDGKEGVEPQSEQVWRQADKYDVPRICFVNKMDKLGADFYFTVRTIEERLGARPLVIQLPIGAENDFIGIIDLVEMKAKVWRGETALGEKYEVEEIPADLADKAEEYRTKLIEAVAETDEALLEKYFGGEELSIDEIKGAIRKLTVASELYPVLCGSAFKNKGVQPMLDAVIDYLPSPLDVESVTGHVPNKEDEVISRKPSTDEPFSALAFKIAVHPFFGKLTYVRVYSGTVESGSQVINSTKGKKERLGKLFQMHANKENPVERASAGHIYAVIGLKDTTTGDTLCDANQQIVLESMTFPDPVIEVAIEPKTKSDQEKLGTAIQKLAEEDPTFKVHLDQETGQTVIGGMGELHLDILVDRMRREFKVEANVGKPQVAYRETIRRKVEKVEFTHKKQTGGSGQFAKVLIDLEPFSGEDGATYEFENKVTGGRIPREYIPSVDAGAQDAMQYGVLAGYPLVNIKVTLLDGAFHEVDSSEMAFKVAGSQVLKKAAQAAQPVILEPIMAVEVITPEDYMGDVIGDLNSRRGQIQAMEERSGARVVKAQVPLSEMFGYVGDLRSKTQGRANYSMVFDSYAEVPANVSKEIIAKATGQ.

Residues 10–286 (SKVRNIGIMA…AVIDYLPSPL (277 aa)) form the tr-type G domain. GTP-binding positions include 19–26 (AHIDAGKT), 83–87 (DTPGH), and 137–140 (NKMD).

This sequence belongs to the TRAFAC class translation factor GTPase superfamily. Classic translation factor GTPase family. EF-G/EF-2 subfamily.

Its subcellular location is the cytoplasm. Its function is as follows. Catalyzes the GTP-dependent ribosomal translocation step during translation elongation. During this step, the ribosome changes from the pre-translocational (PRE) to the post-translocational (POST) state as the newly formed A-site-bound peptidyl-tRNA and P-site-bound deacylated tRNA move to the P and E sites, respectively. Catalyzes the coordinated movement of the two tRNA molecules, the mRNA and conformational changes in the ribosome. The protein is Elongation factor G of Mycolicibacterium gilvum (strain PYR-GCK) (Mycobacterium gilvum (strain PYR-GCK)).